Consider the following 134-residue polypeptide: Putative nickel-responsive regulator (134 aa).

The Ni(2+) site is built by His-78, His-89, His-91, and Cys-97.

Belongs to the transcriptional regulatory CopG/NikR family. Ni(2+) is required as a cofactor.

In terms of biological role, transcriptional regulator. The protein is Putative nickel-responsive regulator of Chlorobaculum tepidum (strain ATCC 49652 / DSM 12025 / NBRC 103806 / TLS) (Chlorobium tepidum).